Consider the following 429-residue polypeptide: MDRIKIIGGNELRGTIPISGAKNAALPLMIAALLTDETLILDNVPRLADVALLQRILGNHGVDIMAAGKRPGDHEYQGQTLHISAKTIVDTTAPYDLVSKMRASFWVIAPLVARMHEAKVSLPGGCAIGTRPVDLLIMALEKLGAEITIDGGYVIAKAPGGLKGATIAFPKVTVSGTHVAVMAAALAKGTTIIDNAACEPEIVDVADCLNKMGAKITGAGTPRITIEGVAKLHGARHTVLPDRIETGTYAMAVAMAGGEVQLSGARPELLQAALDVLTQAGATITVNNDGIKVARNGAGISPVTVTTAPFPGFPTDLQAQLMALMTRAKGASHITETIFENRFMHVQELARFGAKISLDGETATIDGVERLRGAPVMATDLRASVSLVIAALAAEGETMVNRIYHLDRGFERLEEKLSACGANIERISG.

22-23 (KN) contributes to the phosphoenolpyruvate binding site. R102 contacts UDP-N-acetyl-alpha-D-glucosamine. C126 acts as the Proton donor in catalysis. The residue at position 126 (C126) is a 2-(S-cysteinyl)pyruvic acid O-phosphothioketal. UDP-N-acetyl-alpha-D-glucosamine contacts are provided by residues 131 to 135 (RPVDL), D316, and I338.

It belongs to the EPSP synthase family. MurA subfamily.

The protein resides in the cytoplasm. The enzyme catalyses phosphoenolpyruvate + UDP-N-acetyl-alpha-D-glucosamine = UDP-N-acetyl-3-O-(1-carboxyvinyl)-alpha-D-glucosamine + phosphate. It functions in the pathway cell wall biogenesis; peptidoglycan biosynthesis. Cell wall formation. Adds enolpyruvyl to UDP-N-acetylglucosamine. This is UDP-N-acetylglucosamine 1-carboxyvinyltransferase from Rhodopseudomonas palustris (strain TIE-1).